The following is a 99-amino-acid chain: Small ribosomal subunit protein uS14m (99 aa).

It belongs to the universal ribosomal protein uS14 family.

The protein localises to the mitochondrion. The chain is Small ribosomal subunit protein uS14m (RPS14) from Oenothera berteroana (Bertero's evening primrose).